The sequence spans 306 residues: Acetylglutamate kinase (306 aa).

Substrate contacts are provided by residues 68 to 69, Arg-90, and Asn-195; that span reads GG.

This sequence belongs to the acetylglutamate kinase family. ArgB subfamily.

Its subcellular location is the cytoplasm. The catalysed reaction is N-acetyl-L-glutamate + ATP = N-acetyl-L-glutamyl 5-phosphate + ADP. It functions in the pathway amino-acid biosynthesis; L-arginine biosynthesis; N(2)-acetyl-L-ornithine from L-glutamate: step 2/4. Catalyzes the ATP-dependent phosphorylation of N-acetyl-L-glutamate. In Chromohalobacter salexigens (strain ATCC BAA-138 / DSM 3043 / CIP 106854 / NCIMB 13768 / 1H11), this protein is Acetylglutamate kinase.